A 1155-amino-acid polypeptide reads, in one-letter code: ATP-dependent helicase/deoxyribonuclease subunit B (1155 aa).

A UvrD-like helicase ATP-binding domain is found at 1 to 300 (MSLRFIVGRA…AHLEKYYFRH (300 aa)). 8-15 (GRAGSGKS) contacts ATP. The UvrD-like helicase C-terminal domain maps to 280–590 (TPVRFQKDSA…VVGTLERSRN (311 aa)). Residues Cys792, Cys1111, Cys1114, and Cys1120 each contribute to the [4Fe-4S] cluster site.

The protein belongs to the helicase family. AddB/RexB type 1 subfamily. In terms of assembly, heterodimer of AddA and AddB. Mg(2+) is required as a cofactor. The cofactor is [4Fe-4S] cluster.

Its function is as follows. The heterodimer acts as both an ATP-dependent DNA helicase and an ATP-dependent, dual-direction single-stranded exonuclease. Recognizes the chi site generating a DNA molecule suitable for the initiation of homologous recombination. The AddB subunit has 5' -&gt; 3' nuclease activity but not helicase activity. The sequence is that of ATP-dependent helicase/deoxyribonuclease subunit B from Desulforamulus reducens (strain ATCC BAA-1160 / DSM 100696 / MI-1) (Desulfotomaculum reducens).